The chain runs to 191 residues: Fe/S biogenesis protein NfuA (191 aa).

Residues cysteine 149 and cysteine 152 each contribute to the [4Fe-4S] cluster site.

It belongs to the NfuA family. Homodimer. Requires [4Fe-4S] cluster as cofactor.

Its function is as follows. Involved in iron-sulfur cluster biogenesis. Binds a 4Fe-4S cluster, can transfer this cluster to apoproteins, and thereby intervenes in the maturation of Fe/S proteins. Could also act as a scaffold/chaperone for damaged Fe/S proteins. The chain is Fe/S biogenesis protein NfuA from Serratia proteamaculans (strain 568).